The following is a 123-amino-acid chain: UPF0482 protein YE2026 (123 aa).

The signal sequence occupies residues 1 to 31 (MKITSLPRLMRVFLPVAVLALPLAWQTAALA). A disordered region spans residues 47 to 66 (GNNDPMSKEQARQSQQQWDD).

Belongs to the UPF0482 family.

In Yersinia enterocolitica serotype O:8 / biotype 1B (strain NCTC 13174 / 8081), this protein is UPF0482 protein YE2026.